The primary structure comprises 339 residues: Lipoate-protein ligase A (339 aa).

The 188-residue stretch at 29–216 (DPSQQVLFLW…SFENFYAGKA (188 aa)) folds into the BPL/LPL catalytic domain. Residues R71, 76–79 (GAVF), and K134 contribute to the ATP site. K134 is a (R)-lipoate binding site.

Belongs to the LplA family. Monomer.

Its subcellular location is the cytoplasm. The catalysed reaction is L-lysyl-[lipoyl-carrier protein] + (R)-lipoate + ATP = N(6)-[(R)-lipoyl]-L-lysyl-[lipoyl-carrier protein] + AMP + diphosphate + H(+). The protein operates within protein modification; protein lipoylation via exogenous pathway; protein N(6)-(lipoyl)lysine from lipoate: step 1/2. It participates in protein modification; protein lipoylation via exogenous pathway; protein N(6)-(lipoyl)lysine from lipoate: step 2/2. In terms of biological role, catalyzes both the ATP-dependent activation of exogenously supplied lipoate to lipoyl-AMP and the transfer of the activated lipoyl onto the lipoyl domains of lipoate-dependent enzymes. This chain is Lipoate-protein ligase A, found in Bdellovibrio bacteriovorus (strain ATCC 15356 / DSM 50701 / NCIMB 9529 / HD100).